The following is a 472-amino-acid chain: Serine incorporator 3 (472 aa).

At Met-1 to Lys-96 the chain is on the extracellular side. Asn-34 carries an N-linked (GlcNAc...) asparagine glycan. Residues Ala-97–Leu-117 form a helical membrane-spanning segment. At Lys-118–Gly-132 the chain is on the cytoplasmic side. Residues Phe-133 to Gly-153 traverse the membrane as a helical segment. Residues Gly-154–Glu-158 are Extracellular-facing. A helical membrane pass occupies residues Val-159–Leu-179. Over Val-180–Leu-206 the chain is Cytoplasmic. The chain crosses the membrane as a helical span at residues Leu-207 to Phe-227. Topologically, residues Tyr-228 to Lys-238 are extracellular. The helical transmembrane segment at Val-239–Lys-259 threads the bilayer. At Val-260–Ser-329 the chain is on the cytoplasmic side. The helical transmembrane segment at Gly-330–Tyr-350 threads the bilayer. Topologically, residues Ser-351–Ser-405 are extracellular. Position 371 is a phosphoserine (Ser-371). A helical transmembrane segment spans residues Phe-406 to Tyr-426. Over Ser-427–Lys-445 the chain is Cytoplasmic. The chain crosses the membrane as a helical span at residues Met-446–Leu-466. Over Thr-467–Ser-472 the chain is Extracellular.

Belongs to the TDE1 family. N-glycosylated. In terms of tissue distribution, highly expressed in the neuronal populations such as Purkinje cells in the cerebellum, brainstem and spinal motor neurons, locus coeruleus and raphe nuclei. Highly expressed also in thymus, kidney liver and testis.

Its subcellular location is the cell membrane. The protein resides in the golgi apparatus membrane. The enzyme catalyses a 1,2-diacyl-sn-glycero-3-phospho-L-serine(in) = a 1,2-diacyl-sn-glycero-3-phospho-L-serine(out). It carries out the reaction a 1,2-diacyl-sn-glycero-3-phosphocholine(in) = a 1,2-diacyl-sn-glycero-3-phosphocholine(out). It catalyses the reaction a 1,2-diacyl-sn-glycero-3-phosphoethanolamine(in) = a 1,2-diacyl-sn-glycero-3-phosphoethanolamine(out). Restriction factor required to restrict infectivity of gammaretroviruses: acts by inhibiting an early step of viral infection. Impairs the penetration of the viral particle into the cytoplasm. Non-ATP-dependent, non-specific lipid transporter for phosphatidylserine, phosphatidylcholine, and phosphatidylethanolamine. Functions as a scramblase that flips lipids in both directions across the membrane. Phospholipid scrambling results in gammaretroviral surface exposure of phosphatidylserine and loss of membrane asymmetry, which leads to loss of infectivity. This Mus musculus (Mouse) protein is Serine incorporator 3 (Serinc3).